The chain runs to 242 residues: 7-cyano-7-deazaguanine synthase (242 aa).

The tract at residues 1 to 22 is disordered; it reads MNSSSNEKNKDLNRKNFSSKTD. 32–42 contacts ATP; sequence LSGGLDSTTCL. Zn(2+) contacts are provided by C212, C221, C224, and C227.

It belongs to the QueC family. Zn(2+) serves as cofactor.

The enzyme catalyses 7-carboxy-7-deazaguanine + NH4(+) + ATP = 7-cyano-7-deazaguanine + ADP + phosphate + H2O + H(+). It functions in the pathway purine metabolism; 7-cyano-7-deazaguanine biosynthesis. Its function is as follows. Catalyzes the ATP-dependent conversion of 7-carboxy-7-deazaguanine (CDG) to 7-cyano-7-deazaguanine (preQ(0)). The chain is 7-cyano-7-deazaguanine synthase from Leptospira interrogans serogroup Icterohaemorrhagiae serovar copenhageni (strain Fiocruz L1-130).